Consider the following 258-residue polypeptide: 4-hydroxy-2-oxovalerate aldolase (258 aa).

Residue histidine 48 is the Proton acceptor of the active site. Residue glutamine 149 participates in substrate binding. Residue glutamate 151 participates in Mg(2+) binding. The substrate site is built by alanine 176 and aspartate 177. Aspartate 177 provides a ligand contact to Mg(2+).

It belongs to the HpcH/HpaI aldolase family.

The catalysed reaction is (S)-4-hydroxy-2-oxopentanoate = acetaldehyde + pyruvate. Its pathway is xenobiotic degradation; biphenyl degradation. Its function is as follows. Catalyzes the reversible retro-aldol cleavage of 4-hydroxy-2-oxovalerate to pyruvate and acetaldehyde. The polypeptide is 4-hydroxy-2-oxovalerate aldolase (bphF) (Rhodococcus jostii (strain RHA1)).